We begin with the raw amino-acid sequence, 443 residues long: ATP-dependent protease ATPase subunit HslU (443 aa).

ATP-binding positions include valine 18, glycine 60–glutamate 65, aspartate 255, glutamate 321, and arginine 393.

The protein belongs to the ClpX chaperone family. HslU subfamily. As to quaternary structure, a double ring-shaped homohexamer of HslV is capped on each side by a ring-shaped HslU homohexamer. The assembly of the HslU/HslV complex is dependent on binding of ATP.

It is found in the cytoplasm. ATPase subunit of a proteasome-like degradation complex; this subunit has chaperone activity. The binding of ATP and its subsequent hydrolysis by HslU are essential for unfolding of protein substrates subsequently hydrolyzed by HslV. HslU recognizes the N-terminal part of its protein substrates and unfolds these before they are guided to HslV for hydrolysis. This is ATP-dependent protease ATPase subunit HslU from Colwellia psychrerythraea (strain 34H / ATCC BAA-681) (Vibrio psychroerythus).